Here is a 243-residue protein sequence, read N- to C-terminus: Urease accessory protein UreF 2 (243 aa).

The protein belongs to the UreF family. In terms of assembly, ureD, UreF and UreG form a complex that acts as a GTP-hydrolysis-dependent molecular chaperone, activating the urease apoprotein by helping to assemble the nickel containing metallocenter of UreC. The UreE protein probably delivers the nickel.

It localises to the cytoplasm. In terms of biological role, required for maturation of urease via the functional incorporation of the urease nickel metallocenter. Functionally, disrupting the ure2 operon has no effect on urease activity or pathogen survival in BALB/c mice when administered orally. In Brucella abortus (strain 2308), this protein is Urease accessory protein UreF 2.